Here is a 146-residue protein sequence, read N- to C-terminus: Large ribosomal subunit protein uL15 (146 aa).

Over residues 1–13 (MKLHELKPAEGSR) the composition is skewed to basic and acidic residues. The tract at residues 1–52 (MKLHELKPAEGSRKVRNRVGRGIGSGNGKTAGKGHKGQNARSGGGVRLGFEG) is disordered. Gly residues-rich tracts occupy residues 21-31 (RGIGSGNGKTA) and 42-52 (SGGGVRLGFEG).

It belongs to the universal ribosomal protein uL15 family. As to quaternary structure, part of the 50S ribosomal subunit.

Binds to the 23S rRNA. The sequence is that of Large ribosomal subunit protein uL15 from Bacillus cereus (strain B4264).